Here is a 56-residue protein sequence, read N- to C-terminus: Large ribosomal subunit protein bL32 (56 aa).

The disordered stretch occupies residues 1-27; that stretch reads MAVQQNKKSRSRRDMRRSHDALTTAAV. Basic residues predominate over residues 7 to 16; that stretch reads KKSRSRRDMR.

Belongs to the bacterial ribosomal protein bL32 family.

The polypeptide is Large ribosomal subunit protein bL32 (Actinobacillus pleuropneumoniae serotype 7 (strain AP76)).